The chain runs to 485 residues: MQFSSYEDLRSRLLSHAVTCEAVARHYLDRIRSHEGDNIYITVFENEALQRARSLDLKLAGGGTPGRLFGMPMAIKDNISMKGAPLTCASKMLEGYTSVYDATAVLRLEAEDAIFLGKTNMDEFAMGSSNENSAFGPVPNPFDNQRVPGGSSGGSAAAVAAGLAMVALGSDTGGSVRQPAGFCDIVGLKPTYGRISRYGLVAFASSFDQIGVLALNCDDAALVLEVMAGVDGKDATSSAHPVPAYAAEMTDVSLKGLRIGVPEEFFNESLNPDVASVVRAKLEELRLQGAELVNLTLPQSDYAIAAYYILVTAEASSNLARFDGARYGYRSEAADDLSSMYVKSRTEGFGAEVKRRIMLGTYVLSAGYYDTYYKKAQQVRRLFQDRYREALKGVDVIAGPTSPFPPFGIGDKTADPLEMYLADVFTVPASIVGMPALSVPVGYDSLGLPVGIHLICNFFEEGKMLGIARHMQRPDSSRIPAPSNH.

Residues lysine 76 and serine 151 each act as charge relay system in the active site. Serine 175 serves as the catalytic Acyl-ester intermediate.

The protein belongs to the amidase family. GatA subfamily. As to quaternary structure, heterotrimer of A, B and C subunits.

The enzyme catalyses L-glutamyl-tRNA(Gln) + L-glutamine + ATP + H2O = L-glutaminyl-tRNA(Gln) + L-glutamate + ADP + phosphate + H(+). Functionally, allows the formation of correctly charged Gln-tRNA(Gln) through the transamidation of misacylated Glu-tRNA(Gln) in organisms which lack glutaminyl-tRNA synthetase. The reaction takes place in the presence of glutamine and ATP through an activated gamma-phospho-Glu-tRNA(Gln). The chain is Glutamyl-tRNA(Gln) amidotransferase subunit A from Chlorobium luteolum (strain DSM 273 / BCRC 81028 / 2530) (Pelodictyon luteolum).